A 223-amino-acid polypeptide reads, in one-letter code: Translation initiation factor 6 (223 aa).

It belongs to the eIF-6 family.

Functionally, binds to the 50S ribosomal subunit and prevents its association with the 30S ribosomal subunit to form the 70S initiation complex. In Methanobrevibacter smithii (strain ATCC 35061 / DSM 861 / OCM 144 / PS), this protein is Translation initiation factor 6.